The sequence spans 513 residues: Probable E3 ubiquitin-protein ligase XBOS34 (513 aa).

ANK repeat units follow at residues 39 to 69 (EGKTPLMVASMRPDLINVVQVLIELGANVNA), 75 to 104 (YCGTALHHAAKKGLEQTVHLLLSHGANPFI), and 108 to 137 (DCHTALDLAREKGHVNVVRAIEGRISLFCG). Composition is skewed to polar residues over residues 309-327 (ITTTTATNDWGNPPSNSLN) and 335-355 (SAPSKTSGQVPVVTSSSSTYN). 2 disordered regions span residues 309–378 (ITTT…QNST) and 423–455 (SADGGTAVSSAKPAENEGDAKPAESDANASNSG). Over residues 361–378 (GTSSGQSSSKHNKSQNST) the composition is skewed to low complexity. A compositionally biased stretch (basic and acidic residues) spans 436–446 (AENEGDAKPAE). An RING-type zinc finger spans residues 462–501 (CVICLDAPVEGACIPCGHMAGCMSCLKDIESKKWGCPICR).

The catalysed reaction is S-ubiquitinyl-[E2 ubiquitin-conjugating enzyme]-L-cysteine + [acceptor protein]-L-lysine = [E2 ubiquitin-conjugating enzyme]-L-cysteine + N(6)-ubiquitinyl-[acceptor protein]-L-lysine.. It participates in protein modification; protein ubiquitination. The sequence is that of Probable E3 ubiquitin-protein ligase XBOS34 (XBOS34) from Oryza sativa subsp. japonica (Rice).